The sequence spans 242 residues: MAETISPRYSRILLKLSGEALSGNKDMGIDAQVLDQMSLSIAHLVGLGVQVGIVVGGGNLYRGSQLQKDGLVGRVTGDQMGMLATVMNGLAMRDALVRRNIRTRLMSALPIGTVVESYSSRDAIRHLSQGEVCVFVAGTGNPFFTTDTAACLRGIEIEANLILKATKVDGVYNKDPSKYEDAVKYDHLTFDQVLDEKLGVMDLTAICLCRDHNVPLQVFDMNKSGALLSVVMGEKEGTRVTK.

15 to 18 (KLSG) lines the ATP pocket. G57 is a UMP binding site. G58 and R62 together coordinate ATP. Residues D78 and 139 to 146 (TGNPFFTT) each bind UMP. The ATP site is built by T166, Y172, and D175.

It belongs to the UMP kinase family. In terms of assembly, homohexamer.

The protein localises to the cytoplasm. The enzyme catalyses UMP + ATP = UDP + ADP. Its pathway is pyrimidine metabolism; CTP biosynthesis via de novo pathway; UDP from UMP (UMPK route): step 1/1. Inhibited by UTP. Catalyzes the reversible phosphorylation of UMP to UDP. The chain is Uridylate kinase from Acinetobacter baumannii (strain ATCC 17978 / DSM 105126 / CIP 53.77 / LMG 1025 / NCDC KC755 / 5377).